The sequence spans 94 residues: Aspartyl/glutamyl-tRNA(Asn/Gln) amidotransferase subunit C (94 aa).

The protein belongs to the GatC family. Heterotrimer of A, B and C subunits.

The catalysed reaction is L-glutamyl-tRNA(Gln) + L-glutamine + ATP + H2O = L-glutaminyl-tRNA(Gln) + L-glutamate + ADP + phosphate + H(+). The enzyme catalyses L-aspartyl-tRNA(Asn) + L-glutamine + ATP + H2O = L-asparaginyl-tRNA(Asn) + L-glutamate + ADP + phosphate + 2 H(+). In terms of biological role, allows the formation of correctly charged Asn-tRNA(Asn) or Gln-tRNA(Gln) through the transamidation of misacylated Asp-tRNA(Asn) or Glu-tRNA(Gln) in organisms which lack either or both of asparaginyl-tRNA or glutaminyl-tRNA synthetases. The reaction takes place in the presence of glutamine and ATP through an activated phospho-Asp-tRNA(Asn) or phospho-Glu-tRNA(Gln). This chain is Aspartyl/glutamyl-tRNA(Asn/Gln) amidotransferase subunit C, found in Syntrophomonas wolfei subsp. wolfei (strain DSM 2245B / Goettingen).